The primary structure comprises 58 residues: Ribosome modulation factor (58 aa).

The span at 1–14 (MKRQKRDKLTRAHS) shows a compositional bias: basic residues. Residues 1–25 (MKRQKRDKLTRAHSKGYQAGISGRS) are disordered.

This sequence belongs to the ribosome modulation factor family.

It localises to the cytoplasm. Its function is as follows. During stationary phase, converts 70S ribosomes to an inactive dimeric form (100S ribosomes). The protein is Ribosome modulation factor of Alteromonas naphthalenivorans.